The chain runs to 554 residues: 3-(3-hydroxy-phenyl)propionate/3-hydroxycinnamic acid hydroxylase (554 aa).

Residues 17–46 and 285–295 each bind FAD; these read QVAI…VVEK and FRIDRVLLAGD.

The protein belongs to the PheA/TfdB FAD monooxygenase family. FAD serves as cofactor.

The enzyme catalyses 3-(3-hydroxyphenyl)propanoate + NADH + O2 + H(+) = 3-(2,3-dihydroxyphenyl)propanoate + NAD(+) + H2O. The catalysed reaction is (2E)-3-(3-hydroxyphenyl)prop-2-enoate + NADH + O2 + H(+) = (2E)-3-(2,3-dihydroxyphenyl)prop-2-enoate + NAD(+) + H2O. The protein operates within aromatic compound metabolism; 3-phenylpropanoate degradation. Functionally, catalyzes the insertion of one atom of molecular oxygen into position 2 of the phenyl ring of 3-(3-hydroxyphenyl)propionate (3-HPP) and hydroxycinnamic acid (3HCI). The sequence is that of 3-(3-hydroxy-phenyl)propionate/3-hydroxycinnamic acid hydroxylase from Escherichia coli O81 (strain ED1a).